The chain runs to 509 residues: Putative 6-phosphofructo-2-kinase/fructose-2,6-bisphosphatase YLR345W (509 aa).

Position 6 is a phosphoserine (S6). A 6-phosphofructo-2-kinase region spans residues 6–291; sequence SDDEELLNGL…FFLMNLRQKK (286 aa). Position 90–98 (90–98) interacts with ATP; that stretch reads GLPATSKTL. The Proton donor/acceptor role is filled by D173. 212–217 contacts ATP; that stretch reads NIALAL. Position 237 (R237) interacts with beta-D-fructose 6-phosphate. A fructose-2,6-bisphosphatase region spans residues 292–466; the sequence is GCVYFARCGT…IAHESTLRVL (175 aa). R298 lines the beta-D-fructose 2,6-bisphosphate pocket. Residue 415–418 participates in ATP binding; that stretch reads YKES. Residues Y433 and R464 each contribute to the beta-D-fructose 2,6-bisphosphate site. 460 to 464 serves as a coordination point for ATP; that stretch reads ESTLR.

In the C-terminal section; belongs to the phosphoglycerate mutase family. As to quaternary structure, homodimer.

It localises to the cytoplasm. The enzyme catalyses beta-D-fructose 2,6-bisphosphate + H2O = beta-D-fructose 6-phosphate + phosphate. It catalyses the reaction beta-D-fructose 6-phosphate + ATP = beta-D-fructose 2,6-bisphosphate + ADP + H(+). Functionally, synthesis and degradation of fructose 2,6-bisphosphate. The chain is Putative 6-phosphofructo-2-kinase/fructose-2,6-bisphosphatase YLR345W from Saccharomyces cerevisiae (strain ATCC 204508 / S288c) (Baker's yeast).